A 406-amino-acid polypeptide reads, in one-letter code: Succinylornithine transaminase (406 aa).

K252 bears the N6-(pyridoxal phosphate)lysine mark.

This sequence belongs to the class-III pyridoxal-phosphate-dependent aminotransferase family. AstC subfamily. It depends on pyridoxal 5'-phosphate as a cofactor.

It carries out the reaction N(2)-succinyl-L-ornithine + 2-oxoglutarate = N-succinyl-L-glutamate 5-semialdehyde + L-glutamate. It participates in amino-acid degradation; L-arginine degradation via AST pathway; L-glutamate and succinate from L-arginine: step 3/5. Catalyzes the transamination of N(2)-succinylornithine and alpha-ketoglutarate into N(2)-succinylglutamate semialdehyde and glutamate. Can also act as an acetylornithine aminotransferase. This Shigella sonnei (strain Ss046) protein is Succinylornithine transaminase.